The sequence spans 567 residues: MFS-type transporter poxA (567 aa).

Over residues 1 to 23 (MPASDRTSETGDVEKVTAAETPK) the composition is skewed to basic and acidic residues. The disordered stretch occupies residues 1 to 24 (MPASDRTSETGDVEKVTAAETPKE). 10 helical membrane passes run 35–55 (ALTG…LFLG), 77–97 (ADIG…QLLA), 108–128 (LVFL…GVAV), 141–161 (GAGA…VVPL), 165–185 (SLIL…GPVI), 197–217 (WCFY…ILFF), 240–260 (LAGC…LQWG), 271–291 (SATI…FLIW), 311–331 (IIAS…VGYF), and 349–369 (VMLL…GVIV). N370 carries N-linked (GlcNAc...) asparagine glycosylation. 4 helical membrane passes run 372 to 392 (TGYF…GSGL), 410 to 430 (ILQG…QVAL), 436 to 456 (LIPV…SIML), and 515 to 535 (AIAG…LVSF). The segment at 547-567 (EENKKEAAEEEEEVKVAAVEA) is disordered.

It belongs to the major facilitator superfamily. TCR/Tet family.

It is found in the cell membrane. Its function is as follows. MFS-type transporter; part of the gene cluster that mediates the biosynthesis of oxaleimides, cytotoxic compounds containing an unusual disubstituted succinimide moiety. The protein is MFS-type transporter poxA of Penicillium oxalicum (strain 114-2 / CGMCC 5302) (Penicillium decumbens).